The sequence spans 94 residues: Small ribosomal subunit protein uS19 (94 aa).

Belongs to the universal ribosomal protein uS19 family.

Its function is as follows. Protein S19 forms a complex with S13 that binds strongly to the 16S ribosomal RNA. The chain is Small ribosomal subunit protein uS19 from Buchnera aphidicola subsp. Cinara cedri (strain Cc).